Here is a 2293-residue protein sequence, read N- to C-terminus: Protein Ycf2 (2293 aa).

1642–1649 lines the ATP pocket; that stretch reads GSIGTGRS.

It belongs to the Ycf2 family.

It is found in the plastid. The protein resides in the chloroplast stroma. Its function is as follows. Probable ATPase of unknown function. Its presence in a non-photosynthetic plant (Epifagus virginiana) and experiments in tobacco indicate that it has an essential function which is probably not related to photosynthesis. The protein is Protein Ycf2 of Platanus occidentalis (Sycamore).